Reading from the N-terminus, the 97-residue chain is UPF0235 protein Ppha_2415 (97 aa).

This sequence belongs to the UPF0235 family.

The polypeptide is UPF0235 protein Ppha_2415 (Pelodictyon phaeoclathratiforme (strain DSM 5477 / BU-1)).